A 215-amino-acid polypeptide reads, in one-letter code: Lysozyme-like protein 5 (215 aa).

A signal peptide spans 1-17 (MKHFFITILLFCSVVSA). In terms of domain architecture, Ch-type lysozyme spans 18–215 (ARNGIDINSP…GVSVDMNYIP (198 aa)). Residues aspartate 23, aspartate 113, and glutamate 115 contribute to the active site.

This sequence belongs to the glycosyl hydrolase 25 family.

Functionally, plays a role in resistance to Gram-positive bacteria S.aureus or B.thuringiensis infection. The polypeptide is Lysozyme-like protein 5 (Caenorhabditis elegans).